Here is a 265-residue protein sequence, read N- to C-terminus: Diphthine synthase (265 aa).

Residues L10, D87, V90, 115–116 (SI), L166, A209, and H234 contribute to the S-adenosyl-L-methionine site.

It belongs to the diphthine synthase family. In terms of assembly, homodimer.

The enzyme catalyses 2-[(3S)-amino-3-carboxypropyl]-L-histidyl-[translation elongation factor 2] + 3 S-adenosyl-L-methionine = diphthine-[translation elongation factor 2] + 3 S-adenosyl-L-homocysteine + 3 H(+). It functions in the pathway protein modification; peptidyl-diphthamide biosynthesis. Its function is as follows. S-adenosyl-L-methionine-dependent methyltransferase that catalyzes the trimethylation of the amino group of the modified target histidine residue in translation elongation factor 2 (EF-2), to form an intermediate called diphthine. The three successive methylation reactions represent the second step of diphthamide biosynthesis. In Pyrococcus horikoshii (strain ATCC 700860 / DSM 12428 / JCM 9974 / NBRC 100139 / OT-3), this protein is Diphthine synthase.